Here is a 193-residue protein sequence, read N- to C-terminus: Interleukin-18 (193 aa).

The propeptide occupies Met1–Asp36.

The protein belongs to the IL-1 family. As to quaternary structure, forms a ternary complex with ligand-binding receptor subunit IL18R1 and signaling receptor subunit IL18RAP at the plasma membrane. Mature IL18 first binds to IL18R1 forming a low affinity binary complex, which then interacts with IL18RAP to form a high affinity ternary complex that signals inside the cell. Interacts with cargo receptor TMED10; the interaction mediates the translocation from the cytoplasm into the ERGIC (endoplasmic reticulum-Golgi intermediate compartment) and thereby secretion. The pro-IL-18 precursor is processed by CASP1, CASP4 or CASP5 to yield its mature, active form. The pro-IL-18 precursor features autoinhibitory interactions between the propeptide and the post-cleavage-site region, preventing recognition by the IL18R1 receptor. Processing by CASP1, CASP4 or CASP5 induces conformational changes to generate critical receptor-binding sites. The mature form is then secreted and released in the extracellular milieu by passing through the gasdermin-D (GSDMD) pore. In contrast, cleavage by CASP3 inactivates IL18.

It is found in the cytoplasm. The protein localises to the cytosol. Its subcellular location is the secreted. Pro-inflammatory cytokine primarily involved in epithelial barrier repair, polarized T-helper 1 (Th1) cell and natural killer (NK) cell immune responses. Upon binding to IL18R1 and IL18RAP, forms a signaling ternary complex which activates NF-kappa-B, triggering synthesis of inflammatory mediators. Synergizes with IL12/interleukin-12 to induce IFNG synthesis from T-helper 1 (Th1) cells and natural killer (NK) cells. Involved in transduction of inflammation downstream of pyroptosis: its mature form is specifically released in the extracellular milieu by passing through the gasdermin-D (GSDMD) pore. The chain is Interleukin-18 (IL18) from Bos taurus (Bovine).